The following is a 319-amino-acid chain: Acetyl esterase (319 aa).

The short motif at 91 to 93 is the Involved in the stabilization of the negatively charged intermediate by the formation of the oxyanion hole element; the sequence is HGG. Catalysis depends on residues Ser165, Asp262, and His292.

The protein belongs to the 'GDXG' lipolytic enzyme family. Homodimer. Interacts with MalT and MelA.

The protein localises to the cytoplasm. Functionally, displays esterase activity towards short chain fatty esters (acyl chain length of up to 8 carbons). Able to hydrolyze triacetylglycerol (triacetin) and tributyrylglycerol (tributyrin), but not trioleylglycerol (triolein) or cholesterol oleate. Negatively regulates MalT activity by antagonizing maltotriose binding. Inhibits MelA galactosidase activity. This chain is Acetyl esterase, found in Escherichia coli O157:H7.